Consider the following 76-residue polypeptide: Putative protein StbC (76 aa).

In Escherichia coli, this protein is Putative protein StbC (stbC).